The sequence spans 90 residues: Large ribosomal subunit protein bL27 (90 aa).

A disordered region spans residues Met-1 to Gly-22.

This sequence belongs to the bacterial ribosomal protein bL27 family.

The polypeptide is Large ribosomal subunit protein bL27 (Coxiella burnetii (strain CbuK_Q154) (Coxiella burnetii (strain Q154))).